The sequence spans 396 residues: S-adenosylmethionine synthase (396 aa).

His-16 serves as a coordination point for ATP. Asp-18 is a Mg(2+) binding site. Position 44 (Glu-44) interacts with K(+). Residues Glu-57 and Gln-100 each coordinate L-methionine. Residues 100-110 (QSQDIARGVDN) are flexible loop. ATP contacts are provided by residues 162-164 (DGK), Asp-237, 243-244 (RK), Ala-260, and Lys-264. Asp-237 contacts L-methionine. Lys-268 provides a ligand contact to L-methionine.

Belongs to the AdoMet synthase family. Homotetramer; dimer of dimers. Mg(2+) is required as a cofactor. It depends on K(+) as a cofactor.

It is found in the cytoplasm. The enzyme catalyses L-methionine + ATP + H2O = S-adenosyl-L-methionine + phosphate + diphosphate. The protein operates within amino-acid biosynthesis; S-adenosyl-L-methionine biosynthesis; S-adenosyl-L-methionine from L-methionine: step 1/1. Functionally, catalyzes the formation of S-adenosylmethionine (AdoMet) from methionine and ATP. The overall synthetic reaction is composed of two sequential steps, AdoMet formation and the subsequent tripolyphosphate hydrolysis which occurs prior to release of AdoMet from the enzyme. The chain is S-adenosylmethionine synthase from Myxococcus xanthus.